Here is a 283-residue protein sequence, read N- to C-terminus: ESX-1 secretion-associated protein EspG1 (283 aa).

It belongs to the EspG family. Interacts specifically with ESX-1-dependent PE/PPE proteins. Interacts with PPE68.

Its subcellular location is the cytoplasm. Functionally, specific chaperone for cognate PE/PPE proteins. Plays an important role in preventing aggregation of PE/PPE dimers. The sequence is that of ESX-1 secretion-associated protein EspG1 from Mycobacterium tuberculosis (strain ATCC 25618 / H37Rv).